Consider the following 265-residue polypeptide: Transcription factor Spi-B-like (265 aa).

The interval 1 to 31 (MLTLEASQLDGPHPSYMFSDSSFYDLDSCKP) is TAD1 (Acidic). The TAD2 stretch occupies residues 42–63 (AEPPTDPCAGWLELAEPGYEPF). Residues 127–160 (TPLSEDDDFPTDAPALEVSDSDSDENLSPGGSLD) form a disordered region. Positions 169–252 (LRLYQFLLGL…VKKKLTYQFG (84 aa)) form a DNA-binding region, ETS.

This sequence belongs to the ETS family.

It is found in the nucleus. Functionally, may act as a sequence specific transcriptional activator. The protein is Transcription factor Spi-B-like of Paleosuchus palpebrosus (Cuvier's smooth-fronted caiman).